The chain runs to 985 residues: NAD kinase 2, chloroplastic (985 aa).

The transit peptide at 1 to 62 directs the protein to the chloroplast; the sequence is MFLCFCPCHV…KRRLRFVIRA (62 aa). The calmodulin-binding stretch occupies residues 335–380; it reads APKAEQVELFASIVSDSSKRPIYVHSKEGVWRTSAMVSRWKQYMTR. Disordered regions lie at residues 389-466 and 548-615; these read SEES…PPGN and FSNG…DEAG. 2 stretches are compositionally biased toward basic and acidic residues: residues 390–399 and 413–429; these read EESKRREVSE and VPDE…EVDS. A compositionally biased stretch (polar residues) spans 548-569; sequence FSNGNVHASDNTNKSISDNRGN.

Belongs to the NAD kinase family. As to expression, expressed in leaves.

The protein resides in the plastid. The protein localises to the chloroplast. It carries out the reaction NAD(+) + ATP = ADP + NADP(+) + H(+). Its function is as follows. Involved in chlorophyll synthesis and chloroplast protection against oxidative damage. In Arabidopsis thaliana (Mouse-ear cress), this protein is NAD kinase 2, chloroplastic (NADK2).